Reading from the N-terminus, the 418-residue chain is Putative competence-damage inducible protein (418 aa).

It belongs to the CinA family.

This chain is Putative competence-damage inducible protein, found in Streptococcus pneumoniae (strain JJA).